The primary structure comprises 238 residues: Fmr1 neighbor protein (238 aa).

The segment at 1–30 (MPSDRRPSQRRNRSKSRDYRGARSKVTRAD) is disordered. Topologically, residues 1-79 (MPSDRRPSQR…CLQYLWARRH (79 aa)) are cytoplasmic. Residues 15–30 (KSRDYRGARSKVTRAD) are compositionally biased toward basic and acidic residues. Residues 80-100 (LGLLLLLFWTLVILFRPVNTA) form a helical membrane-spanning segment. The Extracellular segment spans residues 101-178 (KLPILAEAAE…VRDKPTQVLR (78 aa)). One can recognise a P-type domain in the interval 118–176 (MLDFFFPTACIIRDNQVVVACNNQPYLSESECLKSKCCSSTSGTIIKCYAPVRDKPTQV). A helical transmembrane segment spans residues 179–199 (VFGLAAISILVLGFLPMCCCS). Residues 200-238 (MCWRRKRMNRMLKVLKKQKSKGKKPKGRKASEERALLSH) are Cytoplasmic-facing. Over residues 214–227 (LKKQKSKGKKPKGR) the composition is skewed to basic residues. Residues 214-238 (LKKQKSKGKKPKGRKASEERALLSH) are disordered. Residues 228–238 (KASEERALLSH) are compositionally biased toward basic and acidic residues.

The protein localises to the membrane. In Mus musculus (Mouse), this protein is Fmr1 neighbor protein.